The chain runs to 107 residues: Late embryogenesis abundant protein M10 (107 aa).

Positions 1–19 are cleaved as a signal peptide; that stretch reads MGNLMSLVLVALLFSLSLA.

Its function is as follows. May be involved in the acquisition of desiccation tolerance during late phase of embryogenesis. The sequence is that of Late embryogenesis abundant protein M10 from Arabidopsis thaliana (Mouse-ear cress).